We begin with the raw amino-acid sequence, 132 residues long: MVLLEKLWDDVVAGPQPDRGLGRLRKITTQPINIRDIGEGSSSKVVMHRSLTMPAAVSPGTPTTPTTPTTPRKDNVWRSVFNPGSNLATRAIGSNIFDKPTHPNSPSVYDCVDNEAQRKEHVALCLVGAWIK.

Residues 53 to 76 (MPAAVSPGTPTTPTTPTTPRKDNV) form a disordered region. Low complexity predominate over residues 61–70 (TPTTPTTPTT). At Thr64 the chain carries Phosphothreonine.

The protein belongs to the DRM1/ARP family. As to expression, isoform 1: Expressed mainly in the low bolt. Isoform 2: Expressed mainly in the low bolt. Detected in flowers. Isoform 4: Expressed mainly in the low bolt. Isoform 5: Expressed mainly in the 6 days old seedlings. Detected in 16 days old seedlings, axil, low bolt and floral samples, but only barely in leaves and top bolt.

This chain is Dormancy-associated protein 1, found in Arabidopsis thaliana (Mouse-ear cress).